A 112-amino-acid chain; its full sequence is Cell cycle protein GpsB (112 aa).

Residues 42–77 (YQKMADMNNEVVKLSEENHKLKKELEELRLRVATSR) are a coiled coil. Residues 74–96 (ATSRPQDNKNFSSNNSSSASNNV) are disordered. The segment covering 81-95 (NKNFSSNNSSSASNN) has biased composition (low complexity).

Belongs to the GpsB family. Forms polymers through the coiled coil domains. Interacts with PBP1, MreC and EzrA.

The protein localises to the cytoplasm. Divisome component that associates with the complex late in its assembly, after the Z-ring is formed, and is dependent on DivIC and PBP2B for its recruitment to the divisome. Together with EzrA, is a key component of the system that regulates PBP1 localization during cell cycle progression. Its main role could be the removal of PBP1 from the cell pole after pole maturation is completed. Also contributes to the recruitment of PBP1 to the division complex. Not essential for septum formation. The polypeptide is Cell cycle protein GpsB (Staphylococcus epidermidis (strain ATCC 12228 / FDA PCI 1200)).